Here is a 792-residue protein sequence, read N- to C-terminus: Ribosome biogenesis protein BOP1 homolog (792 aa).

Over residues 1-11 the composition is skewed to basic residues; the sequence is MTKKRTVKRKV. Residues 1-167 form a disordered region; sequence MTKKRTVKRK…ESDTSDEEDI (167 aa). Composition is skewed to acidic residues over residues 44-53, 60-72, 82-117, and 157-166; these read EDTTDDEGID, SSED…DEEG, EAEE…ESDA, and EESDTSDEED. WD repeat units follow at residues 453–494, 496–534, 578–620, 623–661, 664–703, 707–746, and 762–792; these read GHTD…RTIE, NDVV…KLLI, THFK…SQIP, KSKG…LIKK, TNSK…KPYQ, LHRN…DLLQ, and RDEF…RLYT.

Belongs to the WD repeat BOP1/ERB1 family.

The protein localises to the nucleus. Its subcellular location is the nucleolus. The protein resides in the nucleoplasm. In terms of biological role, required for maturation of ribosomal RNAs and formation of the large ribosomal subunit. In Drosophila mojavensis (Fruit fly), this protein is Ribosome biogenesis protein BOP1 homolog.